Reading from the N-terminus, the 622-residue chain is DNA-directed RNA polymerase subunit gamma (622 aa).

Zn(2+) is bound by residues Cys70, Cys72, Cys85, and Cys88. 3 residues coordinate Mg(2+): Asp466, Asp468, and Asp470.

This sequence belongs to the RNA polymerase beta' chain family. RpoC1 subfamily. As to quaternary structure, in cyanobacteria the RNAP catalytic core is composed of 2 alpha, 1 beta, 1 beta', 1 gamma and 1 omega subunit. When a sigma factor is associated with the core the holoenzyme is formed, which can initiate transcription. Requires Mg(2+) as cofactor. It depends on Zn(2+) as a cofactor.

It carries out the reaction RNA(n) + a ribonucleoside 5'-triphosphate = RNA(n+1) + diphosphate. DNA-dependent RNA polymerase catalyzes the transcription of DNA into RNA using the four ribonucleoside triphosphates as substrates. This chain is DNA-directed RNA polymerase subunit gamma, found in Cyanothece sp. (strain PCC 7425 / ATCC 29141).